A 261-amino-acid chain; its full sequence is MIIADNIKQFHSIRNSLIKQQKIGFVPTMGALHNGHISLIKKAKSENDVVIVSIFVNPTQFNNPNDYQTYPNQLQQDIQILASLDVDVLFNPSEKDIYPDGNLLRIEPKLEIANILEGKSRPGHFSGTLTVVLKLLQITKPNNLYLGEKDYQQVMLIKQLVKDFFINTKIIVCPTQRQPSGLPLSSRNKNLTSTDIEIANKIYEILRQDDFSNLEELTNKINSTGAKLQYIQKLNNRIFLAFYIGKVRLIDNFLKETGPSC.

29-36 (MGALHNGH) lines the ATP pocket. Catalysis depends on His36, which acts as the Proton donor. Position 60 (Gln60) interacts with (R)-pantoate. Residue Gln60 participates in beta-alanine binding. Position 147 to 150 (147 to 150 (GEKD)) interacts with ATP. (R)-pantoate is bound at residue Gln153. 184–187 (LSSR) is a binding site for ATP.

The protein belongs to the pantothenate synthetase family. In terms of assembly, homodimer.

The protein resides in the cytoplasm. It catalyses the reaction (R)-pantoate + beta-alanine + ATP = (R)-pantothenate + AMP + diphosphate + H(+). Its pathway is cofactor biosynthesis; (R)-pantothenate biosynthesis; (R)-pantothenate from (R)-pantoate and beta-alanine: step 1/1. Its function is as follows. Catalyzes the condensation of pantoate with beta-alanine in an ATP-dependent reaction via a pantoyl-adenylate intermediate. The protein is Pantothenate synthetase of Francisella tularensis subsp. holarctica (strain FTNF002-00 / FTA).